Consider the following 576-residue polypeptide: Rho GTPase-activating protein gacP (576 aa).

The stretch at 123-189 (LKSIIKTELK…RTNFERVGID (67 aa)) forms a coiled coil. The Rho-GAP domain occupies 277–462 (EDLSVLLNRE…TIIQNFDRIF (186 aa)). A disordered region spans residues 472-576 (VPDTYVPPPN…DEGDAVELSD (105 aa)). Over residues 482 to 500 (NTRNNSVNNFNNVQPSSFS) the composition is skewed to low complexity. The span at 501–513 (ASTSRSINLNKST) shows a compositional bias: polar residues. Residues 514 to 530 (NNPNINDDNNNNNNINN) show a composition bias toward low complexity. Acidic residues predominate over residues 565-576 (SFDEGDAVELSD).

It localises to the cytoplasm. In terms of biological role, rho GTPase-activating protein involved in the signal transduction pathway. In Dictyostelium discoideum (Social amoeba), this protein is Rho GTPase-activating protein gacP (gacP).